Here is a 240-residue protein sequence, read N- to C-terminus: Small ribosomal subunit protein eS4 (240 aa).

The S4 RNA-binding domain occupies 37 to 99 (VPLVVLLRDV…RGEFFRVFPD (63 aa)).

This sequence belongs to the eukaryotic ribosomal protein eS4 family.

This Halorubrum lacusprofundi (strain ATCC 49239 / DSM 5036 / JCM 8891 / ACAM 34) protein is Small ribosomal subunit protein eS4.